Here is a 311-residue protein sequence, read N- to C-terminus: HPr kinase/phosphorylase (311 aa).

Active-site residues include H139 and K160. 154–161 (GESGVGKS) is a binding site for ATP. Mg(2+) is bound at residue S161. Residue D178 is the Proton acceptor; for phosphorylation activity. Proton donor; for dephosphorylation activity of the active site. The segment at 202–211 (IEIRGIGILD) is important for the catalytic mechanism of both phosphorylation and dephosphorylation. A Mg(2+)-binding site is contributed by E203. The active site involves R244. Positions 265–270 (PVRPGR) are important for the catalytic mechanism of dephosphorylation.

This sequence belongs to the HPrK/P family. Homohexamer. Requires Mg(2+) as cofactor.

The catalysed reaction is [HPr protein]-L-serine + ATP = [HPr protein]-O-phospho-L-serine + ADP + H(+). The enzyme catalyses [HPr protein]-O-phospho-L-serine + phosphate + H(+) = [HPr protein]-L-serine + diphosphate. Its function is as follows. Catalyzes the ATP- as well as the pyrophosphate-dependent phosphorylation of a specific serine residue in HPr, a phosphocarrier protein of the phosphoenolpyruvate-dependent sugar phosphotransferase system (PTS). HprK/P also catalyzes the pyrophosphate-producing, inorganic phosphate-dependent dephosphorylation (phosphorolysis) of seryl-phosphorylated HPr (P-Ser-HPr). The two antagonistic activities of HprK/P are regulated by several intracellular metabolites, which change their concentration in response to the absence or presence of rapidly metabolisable carbon sources (glucose, fructose, etc.) in the growth medium. Therefore, by controlling the phosphorylation state of HPr, HPrK/P is a sensor enzyme that plays a major role in the regulation of carbon metabolism and sugar transport: it mediates carbon catabolite repression (CCR), and regulates PTS-catalyzed carbohydrate uptake and inducer exclusion. The sequence is that of HPr kinase/phosphorylase from Caldicellulosiruptor bescii (strain ATCC BAA-1888 / DSM 6725 / KCTC 15123 / Z-1320) (Anaerocellum thermophilum).